The sequence spans 549 residues: Neutral amino acid transporter 9 (549 aa).

The segment at 1–27 (MDEDSKPLLGSVPTGDYYTDSLDPKQR) is disordered. Topologically, residues 1 to 107 (MDEDSKPLLG…GGDSPIKNPS (107 aa)) are cytoplasmic. The chain crosses the membrane as a helical span at residues 108–128 (IVTIFAIWNTMMGTSILSIPW). Positions 117-122 (TMMGTS) are important for arginine binding and amino acid transport. Arginine is bound at residue S122. Over 129–134 (GIKQAG) the chain is Lumenal. Residues 135 to 155 (FTLGIIIIVLMGLLTLYCCYR) traverse the membrane as a helical segment. Residues 156-186 (VLKSTKSIPYVDTSDWEFPDVCKYYFGGFGK) lie on the Cytoplasmic side of the membrane. Residues 187–213 (WSSLVFSLVSLIGAMVVYWVLMSNFLF) traverse the membrane as a helical segment. At 214–271 (NTGKFIFNYVHNVNTSDAFGTNGTERVICPYPDVDPHGNSSTSLYSGSDNSTGLEFDH) the chain is on the lumenal side. N-linked (GlcNAc...) asparagine glycosylation is found at N227, N235, N252, and N263. A disulfide bond links C242 and C412. A helical transmembrane segment spans residues 272-288 (WWSKTNTIPFYLILLLL). The Cytoplasmic segment spans residues 289-297 (PLLNFRSAS). A helical membrane pass occupies residues 298–322 (FFARFTFLGTISVIYLIFLVTYKAI). The Lumenal segment spans residues 323–344 (QLGFHLEFHWFDSSMFFVPEFR). Residues 345-365 (TLFPQLSGVLTLAFFIHNCII) traverse the membrane as a helical segment. Residues 366–382 (TLMKNNKHQENNVRDLS) are Cytoplasmic-facing. A helical transmembrane segment spans residues 383 to 403 (LAYLLVGLTYLYVGVLIFAAF). Over 404–425 (PSPPLSKECIEPNFLDNFPSSD) the chain is Lumenal. Residues 426–446 (ILVFVARTFLLFQMTTVYPLL) form a helical membrane-spanning segment. A CARC motif motif is present at residues 432–442 (RTFLLFQMTTV). The short motif at 445–451 (LLGYLVR) is the CRAC motif element. Over 447-467 (GYLVRVQLMGQIFGNHYPGFL) the chain is Cytoplasmic. A helical transmembrane segment spans residues 468–488 (HVFVLNVFVVGAGVLMARFYP). Residues 489-495 (NIGSIIR) are Lumenal-facing. The helical transmembrane segment at 496-516 (YSGALCGLALVFVLPSLIHMV) threads the bilayer. Over 517–528 (SLKRRGELRWTS) the chain is Cytoplasmic. The helical transmembrane segment at 529 to 549 (TLFHGFLILLGVANLLGQFFM) threads the bilayer.

It belongs to the amino acid/polyamine transporter 2 family. SLC38A9 subfamily. In terms of assembly, associated component of the Ragulator complex. Associated component of the Rag GTPases heterodimers (RRAGA and RRAGC). Post-translationally, glycosylated.

The protein localises to the lysosome membrane. Its subcellular location is the late endosome membrane. It carries out the reaction L-leucine(in) = L-leucine(out). The enzyme catalyses L-tyrosine(in) = L-tyrosine(out). The catalysed reaction is L-glutamine(out) = L-glutamine(in). It catalyses the reaction L-asparagine(out) = L-asparagine(in). With respect to regulation, amino acid transport activity is increased by sodium. Transport of L-glutamine, leucine and tyrosine is increased by arginine binding. In terms of biological role, lysosomal amino acid transporter involved in the activation of mTORC1 in response to amino acid levels. Probably acts as an amino acid sensor of the Rag GTPases and Ragulator complexes, 2 complexes involved in amino acid sensing and activation of mTORC1, a signaling complex promoting cell growth in response to growth factors, energy levels, and amino acids. Following activation by amino acids, the Ragulator and Rag GTPases function as a scaffold recruiting mTORC1 to lysosomes where it is in turn activated. SLC38A9 mediates transport of amino acids with low capacity and specificity with a slight preference for polar amino acids. Acts as an arginine sensor. Following activation by arginine binding, mediates transport of L-glutamine, leucine and tyrosine with high efficiency, and is required for the efficient utilization of these amino acids after lysosomal protein degradation. However, the transport mechanism is not well defined and the role of sodium is not clear. Guanine exchange factor (GEF) that, upon arginine binding, stimulates GDP release from RRAGA and therefore activates the Rag GTPase heterodimer and the mTORC1 pathway in response to nutrient sufficiency. The chain is Neutral amino acid transporter 9 from Danio rerio (Zebrafish).